The primary structure comprises 327 residues: Phenylalanine--tRNA ligase alpha subunit (327 aa).

Mg(2+) is bound at residue Glu252.

It belongs to the class-II aminoacyl-tRNA synthetase family. Phe-tRNA synthetase alpha subunit type 1 subfamily. Tetramer of two alpha and two beta subunits. It depends on Mg(2+) as a cofactor.

It localises to the cytoplasm. It catalyses the reaction tRNA(Phe) + L-phenylalanine + ATP = L-phenylalanyl-tRNA(Phe) + AMP + diphosphate + H(+). The protein is Phenylalanine--tRNA ligase alpha subunit of Cronobacter sakazakii (strain ATCC BAA-894) (Enterobacter sakazakii).